The sequence spans 408 residues: CinA-like protein (408 aa).

This sequence belongs to the CinA family.

The sequence is that of CinA-like protein from Thermotoga neapolitana (strain ATCC 49049 / DSM 4359 / NBRC 107923 / NS-E).